The following is a 296-amino-acid chain: Bifunctional protein FolD (296 aa).

NADP(+) is bound by residues 166–168 (GRS), Ser191, and Ile232.

This sequence belongs to the tetrahydrofolate dehydrogenase/cyclohydrolase family. As to quaternary structure, homodimer.

It catalyses the reaction (6R)-5,10-methylene-5,6,7,8-tetrahydrofolate + NADP(+) = (6R)-5,10-methenyltetrahydrofolate + NADPH. The catalysed reaction is (6R)-5,10-methenyltetrahydrofolate + H2O = (6R)-10-formyltetrahydrofolate + H(+). The protein operates within one-carbon metabolism; tetrahydrofolate interconversion. Functionally, catalyzes the oxidation of 5,10-methylenetetrahydrofolate to 5,10-methenyltetrahydrofolate and then the hydrolysis of 5,10-methenyltetrahydrofolate to 10-formyltetrahydrofolate. The sequence is that of Bifunctional protein FolD from Cereibacter sphaeroides (strain ATCC 17029 / ATH 2.4.9) (Rhodobacter sphaeroides).